The following is a 1331-amino-acid chain: Disease resistance protein RUN1 (1331 aa).

Residues methionine 1–serine 20 are disordered. One can recognise a TIR domain in the interval isoleucine 25–leucine 190. NAD(+)-binding positions include arginine 34–arginine 39 and glycine 66. The active site involves glutamate 100. One can recognise an NB-ARC domain in the interval serine 206 to valine 434. 20 LRR repeats span residues alanine 429–aspartate 452, isoleucine 480–isoleucine 509, isoleucine 540–lysine 565, serine 616–glycine 638, cysteine 648–arginine 673, methionine 684–methionine 708, lysine 709–leucine 732, serine 734–methionine 756, lysine 757–leucine 779, serine 781–methionine 803, lysine 804–leucine 826, serine 828–methionine 850, lysine 851–leucine 873, serine 875–methionine 897, lysine 898–leucine 920, serine 922–methionine 944, lysine 945–leucine 967, serine 969–methionine 991, lysine 992–leucine 1014, and leucine 1017–alanine 1040. A Nuclear localization signal motif is present at residues arginine 1287–arginine 1291.

Belongs to the disease resistance TIR-NB-LRR family.

It localises to the nucleus. It is found in the cytoplasm. It catalyses the reaction NAD(+) + H2O = ADP-D-ribose + nicotinamide + H(+). It carries out the reaction NADP(+) + H2O = ADP-D-ribose 2'-phosphate + nicotinamide + H(+). Functionally, disease resistance (R) protein that confers resistance to multiple powdery and downy mildew by promoting cell death. Acts as a NAD(+) hydrolase (NADase): in response to activation, catalyzes cleavage of NAD(+) into ADP-D-ribose (ADPR) and nicotinamide; NAD(+) cleavage triggering a defense system that promotes cell death. Also able to hydrolyze NADP(+), but not other NAD(+)-related molecules. This is Disease resistance protein RUN1 from Vitis rotundifolia (Muscadine grape).